Here is a 284-residue protein sequence, read N- to C-terminus: Acetylglutamate kinase (284 aa).

Substrate is bound by residues 64 to 65 (GG), arginine 86, and asparagine 177.

Belongs to the acetylglutamate kinase family. ArgB subfamily.

The protein resides in the cytoplasm. It catalyses the reaction N-acetyl-L-glutamate + ATP = N-acetyl-L-glutamyl 5-phosphate + ADP. It functions in the pathway amino-acid biosynthesis; L-arginine biosynthesis; N(2)-acetyl-L-ornithine from L-glutamate: step 2/4. In terms of biological role, catalyzes the ATP-dependent phosphorylation of N-acetyl-L-glutamate. The chain is Acetylglutamate kinase from Haemophilus ducreyi (strain 35000HP / ATCC 700724).